Consider the following 286-residue polypeptide: Aquaporin PIP1-1 (286 aa).

Residue M1 is modified to N-acetylmethionine. Residues 1–34 are disordered; sequence MEGKEEDVRVGANKFPERQPIGTSAQSDKDYKEP. Over 1 to 54 the chain is Cytoplasmic; it reads MEGKEEDVRVGANKFPERQPIGTSAQSDKDYKEPPPAPFFEPGELSSWSFWRAG. Residues 55–75 traverse the membrane as a helical segment; the sequence is IAEFIATFLFLYITVLTVMGV. Over 76 to 91 the chain is Extracellular; sequence KRSPNMCASVGIQGIA. Residues 92 to 112 form a helical membrane-spanning segment; sequence WAFGGMIFALVYCTAGISGGH. Over 113-132 the chain is Cytoplasmic; that stretch reads INPAVTFGLFLARKLSLTRA. Positions 114-116 match the NPA 1 motif; that stretch reads NPA. Residues 133 to 153 traverse the membrane as a helical segment; sequence LYYIVMQCLGAICGAGVVKGF. The Extracellular segment spans residues 154-174; the sequence is QPKQYQALGGGANTVAHGYTK. Residues 175–195 form a helical membrane-spanning segment; it reads GSGLGAEIIGTFVLVYTVFSA. Residues 196–208 lie on the Cytoplasmic side of the membrane; the sequence is TDAKRNARDSHVP. Residues 209–229 traverse the membrane as a helical segment; it reads ILAPLPIGFAVFLVHLATIPI. Over 230–256 the chain is Extracellular; that stretch reads TGTGINPARSLGAAIIYNKDHSWDDHW. The short motif at 235-237 is the NPA 2 element; it reads NPA. Residues 257–277 traverse the membrane as a helical segment; it reads VFWVGPFIGAALAALYHVVVI. Over 278–286 the chain is Cytoplasmic; the sequence is RAIPFKSRS. The residue at position 284 (S284) is a Phosphoserine.

The protein belongs to the MIP/aquaporin (TC 1.A.8) family. PIP (TC 1.A.8.11) subfamily. In terms of tissue distribution, widely expressed. Expressed in roots, above ground and in flower buds.

It is found in the cell membrane. Functionally, water channel required to facilitate the transport of water across cell membrane. Its function is impaired by Hg(2+). The protein is Aquaporin PIP1-1 (PIP1-1) of Arabidopsis thaliana (Mouse-ear cress).